The primary structure comprises 536 residues: Lipid scramblase CLPTM1L (536 aa).

The Cytoplasmic portion of the chain corresponds to 1 to 9 (MLSRSSFTS). A helical transmembrane segment spans residues 10–30 (LAVGVFAVYVAHTCWVMYGIV). Over 31 to 284 (YTRPCPSGGA…VKGIFVDTNL (254 aa)) the chain is Extracellular. Residues N92, N102, and N229 are each glycosylated (N-linked (GlcNAc...) asparagine). Residues 285-305 (YFLALTFFVAAFHLLFDFLAF) form a helical membrane-spanning segment. At 306–324 (KNDISFWKKKRSMIGMSTK) the chain is on the cytoplasmic side. Residues 325–342 (AVLWRCFSTVVIFLFLLD) form a helical membrane-spanning segment. At 343–346 (EQTS) the chain is on the extracellular side. Residues 347–364 (LLVLIPAGIGAVIELWKV) form a helical membrane-spanning segment. Residues 365–402 (KKALKMTVKWQGIRPKVQFGASNDSEKKTEEYDTQAMK) lie on the Cytoplasmic side of the membrane. The chain crosses the membrane as a helical span at residues 403–423 (YLSYLLYPLCIGGAAYSLLNV). At 424–428 (KYKSW) the chain is on the extracellular side. A helical membrane pass occupies residues 429–449 (YSWLINSFVNGVYAFGFLFML). Topologically, residues 450–536 (PQLFVNYKMK…YEEKPKKKSS (87 aa)) are cytoplasmic.

The protein belongs to the CLPTM1 family.

Its subcellular location is the endoplasmic reticulum membrane. It catalyses the reaction a 6-(alpha-D-glucosaminyl)-1-(1,2-diacyl-sn-glycero-3-phospho)-1D-myo-inositol(in) = a 6-(alpha-D-glucosaminyl)-1-(1,2-diacyl-sn-glycero-3-phospho)-1D-myo-inositol(out). The enzyme catalyses 6-(alpha-D-glucosaminyl)-(1-octadecanoyl,2-(9Z)-octadecenoyl-sn-glycero-3-phospho)-1D-myo-inositol(in) = 6-(alpha-D-glucosaminyl)-(1-octadecanoyl,2-(9Z)-octadecenoyl-sn-glycero-3-phospho)-1D-myo-inositol(out). It carries out the reaction a 1,2-diacyl-sn-glycero-3-phospho-(1D-myo-inositol)(in) = a 1,2-diacyl-sn-glycero-3-phospho-(1D-myo-inositol)(out). The catalysed reaction is a 1,2-diacyl-sn-glycero-3-phosphocholine(in) = a 1,2-diacyl-sn-glycero-3-phosphocholine(out). It catalyses the reaction a 1,2-diacyl-sn-glycero-3-phosphoethanolamine(in) = a 1,2-diacyl-sn-glycero-3-phosphoethanolamine(out). Scramblase that mediates the translocation of glucosaminylphosphatidylinositol (alpha-D-GlcN-(1-6)-(1,2-diacyl-sn-glycero-3-phospho)-1D-myo-inositol, GlcN-PI) across the endoplasmic reticulum (ER) membrane, from the cytosolic leaflet to the luminal leaflet of the ER membrane, where it participates in the biosynthesis of glycosylphosphatidylinositol (GPI). GPI is a lipid glycoconjugate involved in post-translational modification of proteins. Can also translocate 1,2-diacyl-sn-glycero-3-phospho-(1D-myo-inositol) (phosphatidylinositol or PI), as well as several other phospholipids (1,2-diacyl-sn-glycero-3-phosphocholine, 1,2-diacyl-sn-glycero-3-phosphoethanolamine), and N-acetylglucosaminylphosphatidylinositol (GlcNAc-PI) in vitro. The sequence is that of Lipid scramblase CLPTM1L (CLPTM1L) from Gallus gallus (Chicken).